Consider the following 494-residue polypeptide: Glycerol kinase (494 aa).

Threonine 13 is a binding site for ADP. ATP is bound by residues threonine 13, threonine 14, and serine 15. Threonine 13 provides a ligand contact to sn-glycerol 3-phosphate. Arginine 17 provides a ligand contact to ADP. The sn-glycerol 3-phosphate site is built by arginine 83, glutamate 84, tyrosine 135, and aspartate 244. Residues arginine 83, glutamate 84, tyrosine 135, aspartate 244, and glutamine 245 each coordinate glycerol. Residues threonine 266 and glycine 309 each contribute to the ADP site. Residues threonine 266, glycine 309, glutamine 313, and glycine 410 each contribute to the ATP site. ADP is bound by residues glycine 410 and asparagine 414.

This sequence belongs to the FGGY kinase family.

It catalyses the reaction glycerol + ATP = sn-glycerol 3-phosphate + ADP + H(+). It functions in the pathway polyol metabolism; glycerol degradation via glycerol kinase pathway; sn-glycerol 3-phosphate from glycerol: step 1/1. Inhibited by fructose 1,6-bisphosphate (FBP). Its function is as follows. Key enzyme in the regulation of glycerol uptake and metabolism. Catalyzes the phosphorylation of glycerol to yield sn-glycerol 3-phosphate. This Shewanella sp. (strain ANA-3) protein is Glycerol kinase.